Here is a 144-residue protein sequence, read N- to C-terminus: 3-hydroxyacyl-[acyl-carrier-protein] dehydratase FabZ (144 aa).

H51 is a catalytic residue.

It belongs to the thioester dehydratase family. FabZ subfamily.

It localises to the cytoplasm. It catalyses the reaction a (3R)-hydroxyacyl-[ACP] = a (2E)-enoyl-[ACP] + H2O. Functionally, involved in unsaturated fatty acids biosynthesis. Catalyzes the dehydration of short chain beta-hydroxyacyl-ACPs and long chain saturated and unsaturated beta-hydroxyacyl-ACPs. The sequence is that of 3-hydroxyacyl-[acyl-carrier-protein] dehydratase FabZ from Clostridium botulinum (strain 657 / Type Ba4).